The sequence spans 640 residues: (Z)-beta-ocimene synthase TPS13PK, chloroplastic (640 aa).

The N-terminal 95 residues, Met1–Arg95, are a transit peptide targeting the chloroplast. Residues Met50–Asn69 are disordered. Over residues Gln60–Asn69 the composition is skewed to polar residues. (2E)-geranyl diphosphate contacts are provided by Arg334, Asp371, Asp375, Arg515, and Asp518. 2 residues coordinate Mg(2+): Asp371 and Asp375. Positions Asp371–Asp375 match the DDXXD motif motif. Mg(2+)-binding residues include Asp518, Thr522, and Glu526.

The protein belongs to the terpene synthase family. Monomer. Mg(2+) is required as a cofactor.

Its subcellular location is the plastid. The protein localises to the chloroplast. It catalyses the reaction (2E)-geranyl diphosphate = (Z)-beta-ocimene + diphosphate. Its pathway is secondary metabolite biosynthesis; terpenoid biosynthesis. Functionally, involved in monoterpene (C10) olefins biosynthesis, constituants of cannabinoids and terpenoids-rich resins. Catalyzes mainly the conversion of (2E)-geranyl diphosphate to (Z)-beta-ocimene. The polypeptide is (Z)-beta-ocimene synthase TPS13PK, chloroplastic (Cannabis sativa (Hemp)).